Here is a 249-residue protein sequence, read N- to C-terminus: Putative SAP domain-containing protein 049L (249 aa).

Basic and acidic residues-rich tracts occupy residues 1–12 (MAAPKAEGEDKP), 22–38 (PKPE…KEFC), and 95–107 (KKAE…KLDE). Residues 1–110 (MAAPKAEGED…DDKKLDEATG (110 aa)) form a disordered region. In terms of domain architecture, SAP spans 119–153 (LSKLTIQTLKGMCKTRNLKISGNKAALVQRLIEAD).

The chain is Putative SAP domain-containing protein 049L from Frog virus 3 (isolate Goorha) (FV-3).